The following is a 332-amino-acid chain: Tsukubadiene synthase (332 aa).

Mg(2+)-binding residues include D75 and E80. The short motif at 75–80 (DDHLDE) is the DDXXXE motif element. Residue R165 coordinates substrate. Mg(2+) contacts are provided by S212, S216, and E220. The short motif at 212 to 220 (SDLHSFQLE) is the SXXXSXXXE motif element. 298–299 (RY) contacts substrate.

Belongs to the terpene synthase family. Requires Mg(2+) as cofactor.

The catalysed reaction is (2E,6E,10E)-geranylgeranyl diphosphate = tsukubadiene + diphosphate. Its function is as follows. Catalyzes the formation of the 5-9-5 ring skeleton (3S,6S,11R,14S)-tsukubadiene from geranylgeranyl diphosphate (GGPP) via a 1,11-cyclization and a 10Re,14Re-cyclization. This is Tsukubadiene synthase from Streptomyces tsukubensis (strain DSM 42081 / NBRC 108919 / NRRL 18488 / 9993).